A 351-amino-acid chain; its full sequence is Ferredoxin--NADP reductase (351 aa).

Residues Asp44, Gln52, Tyr57, Val97, Phe132, Asp296, and Ser337 each coordinate FAD.

The protein belongs to the ferredoxin--NADP reductase type 2 family. As to quaternary structure, homodimer. FAD serves as cofactor.

The enzyme catalyses 2 reduced [2Fe-2S]-[ferredoxin] + NADP(+) + H(+) = 2 oxidized [2Fe-2S]-[ferredoxin] + NADPH. The protein is Ferredoxin--NADP reductase of Paraburkholderia phymatum (strain DSM 17167 / CIP 108236 / LMG 21445 / STM815) (Burkholderia phymatum).